The primary structure comprises 630 residues: ATP synthase subunit alpha (630 aa).

173–180 is an ATP binding site; the sequence is GDRQTGKT. The tract at residues 592 to 630 is disordered; the sequence is AGGASTAADEDGAGDDEEEAPAPKAKSKNAKSASKAKEK. Residues 599–611 show a composition bias toward acidic residues; it reads ADEDGAGDDEEEA.

The protein belongs to the ATPase alpha/beta chains family. F-type ATPases have 2 components, CF(1) - the catalytic core - and CF(0) - the membrane proton channel. CF(1) has five subunits: alpha(3), beta(3), gamma(1), delta(1), epsilon(1). CF(0) has three main subunits: a(1), b(2) and c(9-12). The alpha and beta chains form an alternating ring which encloses part of the gamma chain. CF(1) is attached to CF(0) by a central stalk formed by the gamma and epsilon chains, while a peripheral stalk is formed by the delta and b chains.

It is found in the cell inner membrane. The enzyme catalyses ATP + H2O + 4 H(+)(in) = ADP + phosphate + 5 H(+)(out). Produces ATP from ADP in the presence of a proton gradient across the membrane. The alpha chain is a regulatory subunit. The chain is ATP synthase subunit alpha from Sorangium cellulosum (strain So ce56) (Polyangium cellulosum (strain So ce56)).